Consider the following 383-residue polypeptide: Phospho-N-acetylmuramoyl-pentapeptide-transferase (383 aa).

9 consecutive transmembrane segments (helical) span residues 26-46, 73-93, 98-118, 131-151, 182-202, 221-241, 258-278, 283-305, and 360-380; these read TAGA…GVIE, TMGG…WAEL, IILL…DDFL, IYKI…LYYF, IFLP…IPFA, GLAI…SYVS, AGEV…FLWF, AQVF…IALF, and QVVF…IATL.

It belongs to the glycosyltransferase 4 family. MraY subfamily. It depends on Mg(2+) as a cofactor.

It localises to the cell inner membrane. The catalysed reaction is UDP-N-acetyl-alpha-D-muramoyl-L-alanyl-gamma-D-glutamyl-meso-2,6-diaminopimeloyl-D-alanyl-D-alanine + di-trans,octa-cis-undecaprenyl phosphate = di-trans,octa-cis-undecaprenyl diphospho-N-acetyl-alpha-D-muramoyl-L-alanyl-D-glutamyl-meso-2,6-diaminopimeloyl-D-alanyl-D-alanine + UMP. The protein operates within cell wall biogenesis; peptidoglycan biosynthesis. Functionally, catalyzes the initial step of the lipid cycle reactions in the biosynthesis of the cell wall peptidoglycan: transfers peptidoglycan precursor phospho-MurNAc-pentapeptide from UDP-MurNAc-pentapeptide onto the lipid carrier undecaprenyl phosphate, yielding undecaprenyl-pyrophosphoryl-MurNAc-pentapeptide, known as lipid I. The sequence is that of Phospho-N-acetylmuramoyl-pentapeptide-transferase from Brachyspira hyodysenteriae (strain ATCC 49526 / WA1).